The sequence spans 624 residues: Galactan 5-O-arabinofuranosyltransferase (624 aa).

Transmembrane regions (helical) follow at residues 5-25, 43-63, 73-93, 127-147, 159-179, 181-201, 203-223, 234-254, 280-300, 326-346, 355-375, 391-411, and 422-442; these read VLGQ…VAIA, ALTT…GLLW, LGAL…PLGA, IGLP…IAAA, WSIV…AAMI, FEYA…YAST, PYAA…WAGL, AIVG…LLLV, LAVI…PYLL, FPMF…VWLV, AGAL…SMLT, LTVL…LAIA, and VVAA…QDIP.

This sequence belongs to the glycosyltransferase 85 family.

Its subcellular location is the cell membrane. The enzyme catalyses Adds an alpha-D-arabinofuranosyl group from trans,octacis-decaprenylphospho-beta-D-arabinofuranose at the 5-O-position of the eighth, tenth and twelfth galactofuranose unit of the galactofuranan chain of [beta-D-galactofuranosyl-(1-&gt;5)-beta-D-galactofuranosyl-(1-&gt;6)]14-beta-D-galactofuranosyl-(1-&gt;5)-beta-D-galactofuranosyl-(1-&gt;4)-alpha-L-rhamnopyranosyl-(1-&gt;3)-N-acetyl-alpha-D-glucosaminyl-diphospho-trans,octacis-decaprenol.. Its pathway is cell wall biogenesis; cell wall polysaccharide biosynthesis. Functionally, involved in the biosynthesis of the arabinogalactan (AG) region of the mycolylarabinogalactan-peptidoglycan (mAGP) complex, an essential component of the mycobacterial cell wall. Catalyzes the addition of the first key arabinofuranosyl (Araf) residue from the sugar donor decaprenyl-phospho-arabinose (DPA) on the C-5 of a 6-linked galactofuranosyl (Galf) of the galactan domain, thus 'priming' the galactan for further elaboration by other arabinofuranosyltransferases. It is not able to add an Araf residue to a terminal Galf. The chain is Galactan 5-O-arabinofuranosyltransferase from Mycolicibacterium smegmatis (strain ATCC 700084 / mc(2)155) (Mycobacterium smegmatis).